A 900-amino-acid polypeptide reads, in one-letter code: Alanine--tRNA ligase (900 aa).

4 residues coordinate Zn(2+): H604, H608, C708, and H712.

The protein belongs to the class-II aminoacyl-tRNA synthetase family. Zn(2+) is required as a cofactor.

The protein resides in the cytoplasm. The enzyme catalyses tRNA(Ala) + L-alanine + ATP = L-alanyl-tRNA(Ala) + AMP + diphosphate. In terms of biological role, catalyzes the attachment of alanine to tRNA(Ala) in a two-step reaction: alanine is first activated by ATP to form Ala-AMP and then transferred to the acceptor end of tRNA(Ala). Also edits incorrectly charged Ser-tRNA(Ala) and Gly-tRNA(Ala) via its editing domain. This is Alanine--tRNA ligase from Saccharolobus islandicus (strain M.14.25 / Kamchatka #1) (Sulfolobus islandicus).